A 471-amino-acid polypeptide reads, in one-letter code: Glutamyl-tRNA(Gln) amidotransferase subunit A (471 aa).

Residues Lys-66 and Ser-141 each act as charge relay system in the active site. Catalysis depends on Ser-165, which acts as the Acyl-ester intermediate.

This sequence belongs to the amidase family. GatA subfamily. As to quaternary structure, heterotrimer of A, B and C subunits.

The enzyme catalyses L-glutamyl-tRNA(Gln) + L-glutamine + ATP + H2O = L-glutaminyl-tRNA(Gln) + L-glutamate + ADP + phosphate + H(+). Functionally, allows the formation of correctly charged Gln-tRNA(Gln) through the transamidation of misacylated Glu-tRNA(Gln) in organisms which lack glutaminyl-tRNA synthetase. The reaction takes place in the presence of glutamine and ATP through an activated gamma-phospho-Glu-tRNA(Gln). The chain is Glutamyl-tRNA(Gln) amidotransferase subunit A from Thermus thermophilus (strain ATCC BAA-163 / DSM 7039 / HB27).